Here is a 423-residue protein sequence, read N- to C-terminus: F-box/LRR-repeat protein 2 (423 aa).

One can recognise an F-box domain in the interval 9-55 (GRINKKLPKELLLRIFSFLDIVTLCRCAQISKAWNILALDGSNWQRI). LRR repeat units follow at residues 61 to 87 (QTDV…SLRG), 88 to 113 (CIGV…NLNG), 114 to 139 (CTKI…DLTS), 140 to 165 (CVSI…NLSW), 166 to 191 (CDQI…LLRG), 192 to 217 (CTQL…NLQS), 218 to 243 (CSRI…CLSG), 244 to 269 (CSNL…EAAR), 270 to 295 (CSHL…DLEE), 296 to 321 (CILI…SLSH), 322 to 350 (CELI…ELDN), 351 to 375 (CLLI…ELYD), and 376 to 401 (CQQV…AYFA). The segment at 80 to 90 (LRKLSLRGCIG) is interaction with Calmodulin. A Glycyl lysine isopeptide (Lys-Gly) (interchain with G-Cter in ubiquitin) cross-link involves residue lysine 201. The residue at position 404 (threonine 404) is a Phosphothreonine. Residue cysteine 420 is the site of S-geranylgeranyl cysteine attachment. Residues 420 to 423 (CVIL) carry the CAAX motif motif.

As to quaternary structure, part of the SCF (SKP1-CUL1-F-box) E3 ubiquitin-protein ligase complex SCF(FBXL2) composed of CUL1, SKP1, RBX1 and FBXL2. Interacts with calmodulin; may antagonize substrate ubiquitination by SCF(FBXL2). May interact with PIK3R1. Interacts with PTPN13. In terms of processing, phosphorylated by GSK-beta (GSK3B), promoting recognition by FBXO3, leading to its ubiquitination by the SCF(FBXO3) complex. Ubiquitinated at Lys-201 by the SCF(FBXO3) complex in response to lipopolysaccharide (LPS), leading to its degradation by the proteasome.

The protein localises to the membrane. It functions in the pathway protein modification; protein ubiquitination. Functionally, calcium-activated substrate recognition component of the SCF (SKP1-cullin-F-box protein) E3 ubiquitin-protein ligase complex, SCF(FBXL2), which mediates the ubiquitination and subsequent proteasomal degradation of target proteins. Unlike many F-box proteins, FBXL2 does not seem to target phosphodegron within its substrates but rather calmodulin-binding motifs and is thereby antagonized by calmodulin. This is the case for the cyclins CCND2 and CCND3 which polyubiquitination and subsequent degradation are inhibited by calmodulin. Through CCND2 and CCND3 degradation induces cell-cycle arrest in G(0). SCF(FBXL2) also mediates PIK3R2 ubiquitination and proteasomal degradation thereby regulating phosphatidylinositol 3-kinase signaling and autophagy. PCYT1A monoubiquitination by SCF(FBXL2) and subsequent degradation regulates synthesis of phosphatidylcholine, which is utilized for formation of membranes and of pulmonary surfactant. The SCF(FBXL2) complex acts as a regulator of inflammation by mediating ubiquitination and degradation of TRAF proteins (TRAF1, TRAF2, TRAF3, TRAF4, TRAF5 and TRAF6). The SCF(FBXL2) complex acts as a negative regulator of the NLRP3 inflammasome by mediating ubiquitination and degradation of NLRP3. The sequence is that of F-box/LRR-repeat protein 2 from Pongo abelii (Sumatran orangutan).